A 244-amino-acid chain; its full sequence is 5-oxoprolinase subunit A (244 aa).

Belongs to the LamB/PxpA family. As to quaternary structure, forms a complex composed of PxpA, PxpB and PxpC.

It carries out the reaction 5-oxo-L-proline + ATP + 2 H2O = L-glutamate + ADP + phosphate + H(+). Its function is as follows. Catalyzes the cleavage of 5-oxoproline to form L-glutamate coupled to the hydrolysis of ATP to ADP and inorganic phosphate. The chain is 5-oxoprolinase subunit A from Shigella flexneri.